Consider the following 298-residue polypeptide: Syntaxin-4 (298 aa).

Topologically, residues 1–274 (MRDRTHELRQ…NQKKARKKKV (274 aa)) are cytoplasmic. A phosphoserine mark is found at S15, S29, S35, S36, S117, S208, and S248. The stretch at 38–163 (DDEFFQKVQT…ERIRRQLKIT (126 aa)) forms a coiled coil. Residues 154-298 (ERIRRQLKIT…VIIGITITVG (145 aa)) form an interaction with CENPF region. In terms of domain architecture, t-SNARE coiled-coil homology spans 200–262 (LNEISARHSE…ERGQEHVKIA (63 aa)). A helical; Anchor for type IV membrane protein membrane pass occupies residues 275 to 295 (MIAICVSVTVLILAVIIGITI). At 296–298 (TVG) the chain is on the extracellular side.

It belongs to the syntaxin family. In terms of assembly, found in a complex with VAMP8 and SNAP23. Detected in a complex with SNAP23 and STXBP4. Interacts with SNAP23 and SNAPIN. Interacts with VAMP2. Interacts with LLGL1. Interacts (via C-terminus) with CENPF. Interacts with DOC2B. Interacts with STXBP3; excludes interaction with DOC2B and SNAP25. Interacts with STXBP4; excludes interaction with VAMP2. Component of the SNARE complex composed of STX4, SNAP23 and VAMP7 that interacts with SYT7 during lysosomal exocytosis. Interacts with STXBP6. Interacts with STXBP5L. In terms of tissue distribution, expressed in all tissues tested including adipose, brain, testis, intestine, liver, heart, spleen, skeletal muscle and kidney.

Its subcellular location is the cell membrane. It localises to the cell projection. It is found in the neuron projection. The protein localises to the stereocilium. In terms of biological role, plasma membrane t-SNARE that mediates docking of transport vesicles. Necessary for the translocation of SLC2A4 from intracellular vesicles to the plasma membrane. In neurons, recruited at neurite tips to membrane domains rich in the phospholipid 1-oleoyl-2-palmitoyl-PC (OPPC) which promotes neurite tip surface expression of the dopamine transporter SLC6A3/DAT by facilitating fusion of SLC6A3-containing transport vesicles with the plasma membrane. Together with STXB3 and VAMP2, may also play a role in docking/fusion of intracellular GLUT4-containing vesicles with the cell surface in adipocytes and in docking of synaptic vesicles at presynaptic active zones. Required for normal hearing. The chain is Syntaxin-4 (Stx4) from Rattus norvegicus (Rat).